A 645-amino-acid chain; its full sequence is 1-phosphatidylinositol 4,5-bisphosphate phosphodiesterase zeta-1 (645 aa).

The EF-hand domain occupies 42 to 77; that stretch reads CHFAHVKRIFKENDRHNQGRITTEDFRTIYRCIVHR. The PI-PLC X-box domain maps to 162-306; sequence QDMNKPLNDY…LKFKILVKNK (145 aa). Residues His177 and His222 contribute to the active site. The region spanning 385-501 is the PI-PLC Y-box domain; it reads LSDLVIYTKA…GYVLKPDFLR (117 aa). The C2 domain maps to 501 to 625; sequence RDTTLGFNPN…KGYRRVPLFS (125 aa).

Interacts via its C2 domain with PtdIns(3)P and, to a lesser extent, PtdIns(5)P in vitro. Ca(2+) serves as cofactor.

The protein localises to the nucleus. It localises to the cytoplasm. Its subcellular location is the perinuclear region. It carries out the reaction a 1,2-diacyl-sn-glycero-3-phospho-(1D-myo-inositol-4,5-bisphosphate) + H2O = 1D-myo-inositol 1,4,5-trisphosphate + a 1,2-diacyl-sn-glycerol + H(+). In terms of biological role, the production of the second messenger molecules diacylglycerol (DAG) and inositol 1,4,5-trisphosphate (IP3) is mediated by activated phosphatidylinositol-specific phospholipase C enzymes. In vitro, hydrolyzes PtdIns(4,5)P2 in a Ca(2+)-dependent manner. Triggers intracellular Ca(2+) oscillations in oocytes solely during M phase and is involved in inducing oocyte activation and initiating embryonic development up to the blastocyst stage. Is therefore a strong candidate for the egg-activating soluble sperm factor that is transferred from the sperm into the egg cytoplasm following gamete membrane fusion. May exert an inhibitory effect on phospholipase-C-coupled processes that depend on calcium ions and protein kinase C, including CFTR trafficking and function. This chain is 1-phosphatidylinositol 4,5-bisphosphate phosphodiesterase zeta-1, found in Rattus norvegicus (Rat).